We begin with the raw amino-acid sequence, 273 residues long: Putative phosphoenolpyruvate synthase regulatory protein (273 aa).

154 to 161 (GVSRSGKT) is a binding site for ADP.

This sequence belongs to the pyruvate, phosphate/water dikinase regulatory protein family. PSRP subfamily.

The catalysed reaction is [pyruvate, water dikinase] + ADP = [pyruvate, water dikinase]-phosphate + AMP + H(+). The enzyme catalyses [pyruvate, water dikinase]-phosphate + phosphate + H(+) = [pyruvate, water dikinase] + diphosphate. Bifunctional serine/threonine kinase and phosphorylase involved in the regulation of the phosphoenolpyruvate synthase (PEPS) by catalyzing its phosphorylation/dephosphorylation. This is Putative phosphoenolpyruvate synthase regulatory protein from Halorhodospira halophila (strain DSM 244 / SL1) (Ectothiorhodospira halophila (strain DSM 244 / SL1)).